A 287-amino-acid polypeptide reads, in one-letter code: Acetyl-coenzyme A carboxylase carboxyl transferase subunit beta (287 aa).

A CoA carboxyltransferase N-terminal domain is found at 28-287 (LWKKCPKCEN…ILSLLTNKVA (260 aa)). Residues Cys32, Cys35, Cys51, and Cys54 each coordinate Zn(2+). The segment at 32 to 54 (CPKCENVLYRPELEKNLDVCPKC) adopts a C4-type zinc-finger fold.

It belongs to the AccD/PCCB family. As to quaternary structure, acetyl-CoA carboxylase is a heterohexamer composed of biotin carboxyl carrier protein (AccB), biotin carboxylase (AccC) and two subunits each of ACCase subunit alpha (AccA) and ACCase subunit beta (AccD). Zn(2+) serves as cofactor.

The protein localises to the cytoplasm. It carries out the reaction N(6)-carboxybiotinyl-L-lysyl-[protein] + acetyl-CoA = N(6)-biotinyl-L-lysyl-[protein] + malonyl-CoA. The protein operates within lipid metabolism; malonyl-CoA biosynthesis; malonyl-CoA from acetyl-CoA: step 1/1. Functionally, component of the acetyl coenzyme A carboxylase (ACC) complex. Biotin carboxylase (BC) catalyzes the carboxylation of biotin on its carrier protein (BCCP) and then the CO(2) group is transferred by the transcarboxylase to acetyl-CoA to form malonyl-CoA. This chain is Acetyl-coenzyme A carboxylase carboxyl transferase subunit beta, found in Marinomonas sp. (strain MWYL1).